The primary structure comprises 252 residues: ELH type 2 (252 aa).

A signal peptide spans 1–19 (AISLLMCLILSALCASSES). 3 propeptides span residues 20–75 (AVVH…VNNE), 92–130 (PQEV…QREL), and 144–185 (AAGD…SGIA). Positions 145 to 161 (AGDEDKAEEHNPETESH) are enriched in basic and acidic residues. The tract at residues 145–171 (AGDEDKAEEHNPETESHSRRKRSALTP) is disordered. The residue at position 222 (Lys-222) is a Lysine amide.

Belongs to the molluscan ELH family. As to expression, bag cell neurons.

It localises to the secreted. Functionally, ELH acts as a neurotransmitter locally, upon neurons of the abdominal ganglion and as a hormone by diffusing into the circulating hemolymph and modulating the activity of other organs. It specifically causes contraction of smooth muscle in the ovotestis and expulsion of the egg string. Its function is as follows. Alpha-BCP decreases the activity of a cluster of neurons in the left upper quadrant of the abdominal ganglion. Beta-BCP specifically excites 2 neurons, L1 and R1, in the abdominal ganglion. This Aplysia parvula (Dwarf sea hare) protein is ELH type 2 (ELH2).